The sequence spans 65 residues: Large ribosomal subunit protein bL31 (65 aa).

4 residues coordinate Zn(2+): cysteine 16, cysteine 18, cysteine 36, and cysteine 39.

Belongs to the bacterial ribosomal protein bL31 family. Type A subfamily. In terms of assembly, part of the 50S ribosomal subunit. It depends on Zn(2+) as a cofactor.

Functionally, binds the 23S rRNA. The chain is Large ribosomal subunit protein bL31 from Geobacter sulfurreducens (strain ATCC 51573 / DSM 12127 / PCA).